A 160-amino-acid chain; its full sequence is Non-secretory ribonuclease (160 aa).

Positions 1–27 (MVPKLFTSPICLLLLLGLMGVEGSLHA) are cleaved as a signal peptide. C-linked (Man) tryptophan glycosylation occurs at Trp-34. The active-site Proton acceptor is His-42. Residue Asn-44 is glycosylated (N-linked (GlcNAc...) asparagine). Disulfide bonds link Cys-50–Cys-110, Cys-64–Cys-122, Cys-82–Cys-137, and Cys-89–Cys-98. At Tyr-60 the chain carries 3'-nitrotyrosine. Residue 65-69 (KNQNT) coordinates substrate. N-linked (GlcNAc...) asparagine glycosylation is found at Asn-92, Asn-111, and Asn-138. Residue His-155 is the Proton donor of the active site.

The protein belongs to the pancreatic ribonuclease family. Interacts with and forms a tight 1:1 complex with RNH1. Dimerization of two such complexes may occur.

It is found in the lysosome. The protein resides in the cytoplasmic granule. It carries out the reaction an [RNA] containing cytidine + H2O = an [RNA]-3'-cytidine-3'-phosphate + a 5'-hydroxy-ribonucleotide-3'-[RNA].. The catalysed reaction is an [RNA] containing uridine + H2O = an [RNA]-3'-uridine-3'-phosphate + a 5'-hydroxy-ribonucleotide-3'-[RNA].. This is a non-secretory ribonuclease. It is a pyrimidine specific nuclease with a slight preference for U. Cytotoxin and helminthotoxin. Possesses a wide variety of biological activities. The chain is Non-secretory ribonuclease (RNASE2) from Macaca nemestrina (Pig-tailed macaque).